Consider the following 294-residue polypeptide: MFKGSIVALITPMDEKGQICRISLEKLINYHVASKTEAIVSIGTTGESATLSQEEHINIVMLTLELADGRIPVIAGTGANATTEAISLTKRFEKSGVAGCLSVTPYYNRPTQEGLYQHFKAISENTELPQILYNVPSRTGCDLLPETVAKLSHFNNIIGIKEATGDLSRIHKIKELVKTNFLLISGDDATALDFMQLGGQGVISVTANIAAKEMMEICSYALKGDFINARSINKRLMLLHEALFIEPNPIPVKWLAKKIGLIKSDTLRLPMTPVLDSTRFQLEKAIQYANLKIS.

T45 contributes to the pyruvate binding site. Catalysis depends on Y133, which acts as the Proton donor/acceptor. Catalysis depends on K161, which acts as the Schiff-base intermediate with substrate. I203 lines the pyruvate pocket.

It belongs to the DapA family. As to quaternary structure, homotetramer; dimer of dimers.

It localises to the cytoplasm. The enzyme catalyses L-aspartate 4-semialdehyde + pyruvate = (2S,4S)-4-hydroxy-2,3,4,5-tetrahydrodipicolinate + H2O + H(+). Its pathway is amino-acid biosynthesis; L-lysine biosynthesis via DAP pathway; (S)-tetrahydrodipicolinate from L-aspartate: step 3/4. Its function is as follows. Catalyzes the condensation of (S)-aspartate-beta-semialdehyde [(S)-ASA] and pyruvate to 4-hydroxy-tetrahydrodipicolinate (HTPA). This is 4-hydroxy-tetrahydrodipicolinate synthase from Buchnera aphidicola subsp. Acyrthosiphon pisum (strain APS) (Acyrthosiphon pisum symbiotic bacterium).